Reading from the N-terminus, the 194-residue chain is Lachesicidin (194 aa).

A signal peptide spans 1-22; the sequence is MQGFFWKTWLVLAVCGTPASLA. Positions 23 to 160 are excised as a propeptide; that stretch reads HRPLSYGEAL…DEEKDQPKRV (138 aa). Cystine bridges form between C79/C90 and C101/C118. Residues 125–154 show a composition bias toward acidic residues; the sequence is EEEEEEEEEEQKAEAENDEEVEKEKEDEEK. The disordered stretch occupies residues 125–157; that stretch reads EEEEEEEEEEQKAEAENDEEVEKEKEDEEKDQP.

It belongs to the cathelicidin family. In terms of tissue distribution, expressed by the venom gland.

The protein localises to the secreted. Its subcellular location is the target cell membrane. Potent antimicrobial peptide against Gram-negative and Gram-positive bacteria. Adopts an amphipathic alpha helical conformation, that may allow to partition into the target membrane. Low hemolytic activities have been observed on mammalian cells. This chain is Lachesicidin, found in Lachesis muta rhombeata (Bushmaster).